The chain runs to 274 residues: Acyl-[acyl-carrier-protein]--UDP-N-acetylglucosamine O-acyltransferase (274 aa).

Belongs to the transferase hexapeptide repeat family. LpxA subfamily. In terms of assembly, homotrimer.

Its subcellular location is the cytoplasm. The enzyme catalyses a (3R)-hydroxyacyl-[ACP] + UDP-N-acetyl-alpha-D-glucosamine = a UDP-3-O-[(3R)-3-hydroxyacyl]-N-acetyl-alpha-D-glucosamine + holo-[ACP]. It participates in glycolipid biosynthesis; lipid IV(A) biosynthesis; lipid IV(A) from (3R)-3-hydroxytetradecanoyl-[acyl-carrier-protein] and UDP-N-acetyl-alpha-D-glucosamine: step 1/6. Involved in the biosynthesis of lipid A, a phosphorylated glycolipid that anchors the lipopolysaccharide to the outer membrane of the cell. The protein is Acyl-[acyl-carrier-protein]--UDP-N-acetylglucosamine O-acyltransferase of Bartonella quintana (strain Toulouse) (Rochalimaea quintana).